The chain runs to 196 residues: MKTIIVVTIFGILTCAYPTDGEHCAQEKAMEDFDPSRFFNGKWYVVHYGKTGPTVCQKFSTNGTQGAPTQIVETGYDKFEDYLKFQCDETGKKNDYHYSFKCKSYECGSDNIEFEVDFTVLSASYDDFALVCRTITFTSGTKDKDDEVLVLEREKTLDVIDNCRRTYYLTEFEKMSLSSQFLSKKENITMLSFQLK.

An N-terminal signal peptide occupies residues 1-21; the sequence is MKTIIVVTIFGILTCAYPTDG. N-linked (GlcNAc...) asparagine glycosylation is found at Asn-62 and Asn-187.

The protein belongs to the calycin superfamily. Triabin family. Salivary gland.

The protein resides in the secreted. Inhibits the intrinsic blood coagulation pathway by blocking the activation of host coagulation factor XII (F12) but not the enzymatic activity of activated F12. This Triatoma dimidiata (Kissing bug) protein is Dimiconin.